The following is a 424-amino-acid chain: Spermatogenesis-associated protein 2-like protein (424 aa).

2 disordered regions span residues 233–258 and 273–300; these read EDEG…AELA and TGGR…EEGL. S327 carries the phosphoserine modification.

This sequence belongs to the SPATA2 family.

The polypeptide is Spermatogenesis-associated protein 2-like protein (Homo sapiens (Human)).